Reading from the N-terminus, the 534-residue chain is MDNYTWHSGTLIPSDSPSSIDRSQLYLEILGVLSVVYLLQTLVAYSKSFKAPFVGFRFWYEPKWLVGLRFSQGALAQVNEGYAKYKNAMFKVARNDSDILVIPNKYVEELRSLPDEKISAIRAHIKNLLGKYSTTLILLESDLHTRMLQTKLTPNLGSFIEVIESELLFAMDQEIPANLDDWQSVNVFHIVLRIVARISARVFLGVPACRNEEWLQTSIHYTENVFATVMLLRRFPKWMHPIVGHLLPSYWAIHRNLRTAKRIISPMVRQRRAEEAKRNPDYVKPNDLLQWMMDGANENDGQPDKLAHRQLLLSLASIHTTTMAAAHCFYDLCQHPEYFEPLREEINDVIAQDGGWKKTTLNKMRKLDSFLKESQRINPPSLLAFNRIVSEDLTLSDGTLLPKGTHFSMPSAAILQDNGVEPGADQFDGFRYYKKRLNPEEANKHQFAMTDNNNLHFGHGKYSCPGRFFASNEIKIIMAHLLTDYEFKYPRGATRPRNLTADENLYPDPSARLLMRRRVVAPPQASITPQLVSA.

Residue Asn-3 is glycosylated (N-linked (GlcNAc...) asparagine). Residues 25–45 form a helical membrane-spanning segment; sequence LYLEILGVLSVVYLLQTLVAY. The N-linked (GlcNAc...) asparagine glycan is linked to Asn-95. Residue Cys-464 participates in heme binding. The N-linked (GlcNAc...) asparagine glycan is linked to Asn-498.

Belongs to the cytochrome P450 family. The cofactor is heme.

It localises to the membrane. It functions in the pathway secondary metabolite biosynthesis; terpenoid biosynthesis. Its function is as follows. Bifunctional terpene synthase; part of the gene cluster that mediates the biosynthesis of the diterpene ent-pimara-8(14),15-diene (PD). Within the cluster, the HMG-CoA reductase AN1593 functions in the mevalonate pathway, which produces isoprenoid precursors. The geranylgeranyl pyrophosphate (GGPP) synthase AN1592 is needed in the formation of GGPP, the precursor for diterpenes. Lastly, the pimaradiene synthase pbcA performs the 2 cyclization steps that convert GGPP to ent-pimara-8(14),15-diene. The putative roles of the remaining cluster enzymes in ent-pimara-8(14),15-diene biosynthesis is unclear. The cytochrome P450 monooxygenase AN1598, the glutathione S-transferase AN1595, the oxidoreductases AN1596 and AN1597 probably function as decorative enzymes. It is possible that in biological conditions the compound is oxidized to ent-pimara-8(14),15-dien-19-oic acid, which is a bioactive diterpene compound predominant in many plant extracts. The protein is Cytochrome P450 monooxygenase AN1598 of Emericella nidulans (strain FGSC A4 / ATCC 38163 / CBS 112.46 / NRRL 194 / M139) (Aspergillus nidulans).